A 172-amino-acid polypeptide reads, in one-letter code: Adenine phosphoribosyltransferase (172 aa).

Belongs to the purine/pyrimidine phosphoribosyltransferase family. In terms of assembly, homodimer.

Its subcellular location is the cytoplasm. The catalysed reaction is AMP + diphosphate = 5-phospho-alpha-D-ribose 1-diphosphate + adenine. It participates in purine metabolism; AMP biosynthesis via salvage pathway; AMP from adenine: step 1/1. Its function is as follows. Catalyzes a salvage reaction resulting in the formation of AMP, that is energically less costly than de novo synthesis. This Crocosphaera subtropica (strain ATCC 51142 / BH68) (Cyanothece sp. (strain ATCC 51142)) protein is Adenine phosphoribosyltransferase.